A 630-amino-acid polypeptide reads, in one-letter code: Tyrosinase (630 aa).

Cu cation is bound by residues His69, His92, His101, His317, His321, and His360. Residues 90 to 92 (CVH) constitute a cross-link (2'-(S-cysteinyl)-histidine (Cys-His)).

It belongs to the tyrosinase family. Cu(2+) is required as a cofactor.

The enzyme catalyses 2 L-dopa + O2 = 2 L-dopaquinone + 2 H2O. It catalyses the reaction L-tyrosine + O2 = L-dopaquinone + H2O. Functionally, this is a copper-containing oxidase that functions in the formation of pigments such as melanins and other polyphenolic compounds. The chain is Tyrosinase (tyr1) from Aspergillus fumigatus (strain ATCC MYA-4609 / CBS 101355 / FGSC A1100 / Af293) (Neosartorya fumigata).